Reading from the N-terminus, the 142-residue chain is MATSLDFKTYVDQACRAAEEFVNIYYETMDKRRRALTRLYLDKATLIWNGNAVSGLDALNNFFDTLPSSEFQVNMLDCQPVHEQATQSQTTVLVVTSGTVKFDGNKQHFFNQNFLLTAQSTPNNTVWKIASDCFRFQDWSSS.

Residues 17 to 136 form the NTF2 domain; it reads AAEEFVNIYY…WKIASDCFRF (120 aa).

Associates with NXF1, NXF2, NXF3 and NXF5.

It localises to the nucleus. The protein resides in the cytoplasm. Its function is as follows. Regulator of protein export for NES-containing proteins. Also plays a role in mRNA nuclear export. The sequence is that of NTF2-related export protein 2 from Homo sapiens (Human).